A 260-amino-acid polypeptide reads, in one-letter code: Indole-3-glycerol phosphate synthase (260 aa).

This sequence belongs to the TrpC family.

The enzyme catalyses 1-(2-carboxyphenylamino)-1-deoxy-D-ribulose 5-phosphate + H(+) = (1S,2R)-1-C-(indol-3-yl)glycerol 3-phosphate + CO2 + H2O. The protein operates within amino-acid biosynthesis; L-tryptophan biosynthesis; L-tryptophan from chorismate: step 4/5. This is Indole-3-glycerol phosphate synthase from Staphylococcus aureus (strain Mu3 / ATCC 700698).